Consider the following 321-residue polypeptide: Glutaminase (321 aa).

7 residues coordinate substrate: S69, N120, E165, N172, Y196, Y248, and V266.

This sequence belongs to the glutaminase family. In terms of assembly, homotetramer.

It carries out the reaction L-glutamine + H2O = L-glutamate + NH4(+). The protein is Glutaminase of Bacteroides fragilis (strain YCH46).